The primary structure comprises 300 residues: ATP-dependent (S)-NAD(P)H-hydrate dehydratase (300 aa).

Residues isoleucine 7–valine 289 form the YjeF C-terminal domain. (6S)-NADPHX-binding positions include glycine 107 and asparagine 160–arginine 166. ATP is bound by residues lysine 194–aspartate 198 and glycine 213–glycine 222. Position 223 (aspartate 223) interacts with (6S)-NADPHX.

It belongs to the NnrD/CARKD family. Mg(2+) is required as a cofactor.

It catalyses the reaction (6S)-NADHX + ATP = ADP + phosphate + NADH + H(+). The catalysed reaction is (6S)-NADPHX + ATP = ADP + phosphate + NADPH + H(+). Its function is as follows. Catalyzes the dehydration of the S-form of NAD(P)HX at the expense of ATP, which is converted to ADP. Together with NAD(P)HX epimerase, which catalyzes the epimerization of the S- and R-forms, the enzyme allows the repair of both epimers of NAD(P)HX, a damaged form of NAD(P)H that is a result of enzymatic or heat-dependent hydration. In Entamoeba histolytica (strain ATCC 30459 / HM-1:IMSS / ABRM), this protein is ATP-dependent (S)-NAD(P)H-hydrate dehydratase.